A 348-amino-acid chain; its full sequence is Ion-translocating oxidoreductase complex subunit D (348 aa).

The next 5 membrane-spanning stretches (helical) occupy residues 15–35 (LTAKFMLWVMVAMLPALGMQA), 36–56 (YFFGYGVFIQVFIALLLAVAI), 67–87 (LTAFYVADLSGVLTALILAMS), 88–108 (IPPYAPYWIIVIGIIVALLLA), and 125–145 (VAYALLLVSFPVQMTGWLVPI). Thr186 carries the post-translational modification FMN phosphoryl threonine. Helical transmembrane passes span 212–232 (LFANGWWQINLAFLAGGLLLI), 241–261 (IPAAMLGMFALLSGLTDLLLP), 265–285 (LNVVSQLFSGAMMFGAFFIAT), 298–318 (LIFGGLIGLFVYLIRYYGNYP), and 320–340 (AVAFSVLLANICVPLIDHYTQ).

This sequence belongs to the NqrB/RnfD family. In terms of assembly, the complex is composed of six subunits: RnfA, RnfB, RnfC, RnfD, RnfE and RnfG. It depends on FMN as a cofactor.

Its subcellular location is the cell inner membrane. Functionally, part of a membrane-bound complex that couples electron transfer with translocation of ions across the membrane. This Actinobacillus pleuropneumoniae serotype 7 (strain AP76) protein is Ion-translocating oxidoreductase complex subunit D.